Here is a 61-residue protein sequence, read N- to C-terminus: Photosystem II reaction center protein Z (61 aa).

Helical transmembrane passes span 5–25 (LTAL…VALA) and 38–58 (TKGF…DGVA).

It belongs to the PsbZ family. In terms of assembly, PSII is composed of 1 copy each of membrane proteins PsbA, PsbB, PsbC, PsbD, PsbE, PsbF, PsbH, PsbI, PsbJ, PsbK, PsbL, PsbM, PsbT, PsbX, PsbY, PsbZ, Psb30/Ycf12, at least 3 peripheral proteins of the oxygen-evolving complex and a large number of cofactors. It forms dimeric complexes.

It localises to the plastid. The protein resides in the chloroplast thylakoid membrane. In terms of biological role, may control the interaction of photosystem II (PSII) cores with the light-harvesting antenna, regulates electron flow through the 2 photosystem reaction centers. PSII is a light-driven water plastoquinone oxidoreductase, using light energy to abstract electrons from H(2)O, generating a proton gradient subsequently used for ATP formation. This chain is Photosystem II reaction center protein Z, found in Phaeodactylum tricornutum (strain CCAP 1055/1).